Here is a 260-residue protein sequence, read N- to C-terminus: Triosephosphate isomerase (260 aa).

11–13 serves as a coordination point for substrate; sequence NWK. H103 acts as the Electrophile in catalysis. E175 acts as the Proton acceptor in catalysis. Substrate contacts are provided by residues G181, S220, and 241–242; that span reads GG.

Belongs to the triosephosphate isomerase family. In terms of assembly, homodimer.

The protein localises to the cytoplasm. The enzyme catalyses D-glyceraldehyde 3-phosphate = dihydroxyacetone phosphate. Its pathway is carbohydrate biosynthesis; gluconeogenesis. The protein operates within carbohydrate degradation; glycolysis; D-glyceraldehyde 3-phosphate from glycerone phosphate: step 1/1. Functionally, involved in the gluconeogenesis. Catalyzes stereospecifically the conversion of dihydroxyacetone phosphate (DHAP) to D-glyceraldehyde-3-phosphate (G3P). The protein is Triosephosphate isomerase of Shewanella loihica (strain ATCC BAA-1088 / PV-4).